Here is a 480-residue protein sequence, read N- to C-terminus: Glutamyl-tRNA(Gln) amidotransferase subunit A (480 aa).

Active-site charge relay system residues include Lys74 and Ser149. Ser173 functions as the Acyl-ester intermediate in the catalytic mechanism.

Belongs to the amidase family. GatA subfamily. In terms of assembly, heterotrimer of A, B and C subunits.

It carries out the reaction L-glutamyl-tRNA(Gln) + L-glutamine + ATP + H2O = L-glutaminyl-tRNA(Gln) + L-glutamate + ADP + phosphate + H(+). Its function is as follows. Allows the formation of correctly charged Gln-tRNA(Gln) through the transamidation of misacylated Glu-tRNA(Gln) in organisms which lack glutaminyl-tRNA synthetase. The reaction takes place in the presence of glutamine and ATP through an activated gamma-phospho-Glu-tRNA(Gln). This is Glutamyl-tRNA(Gln) amidotransferase subunit A from Prochlorococcus marinus (strain MIT 9312).